A 393-amino-acid chain; its full sequence is O-phospho-L-seryl-tRNA:Cys-tRNA synthase 1 (393 aa).

Pyridoxal 5'-phosphate contacts are provided by residues 85-86 (AR), N190, and 213-215 (SGH). K216 carries the post-translational modification N6-(pyridoxal phosphate)lysine.

It belongs to the SepCysS family. In terms of assembly, homodimer. Interacts with SepRS. The cofactor is pyridoxal 5'-phosphate.

It carries out the reaction O-phospho-L-seryl-tRNA(Cys) + hydrogen sulfide + H(+) = L-cysteinyl-tRNA(Cys) + phosphate. In terms of biological role, converts O-phospho-L-seryl-tRNA(Cys) (Sep-tRNA(Cys)) to L-cysteinyl-tRNA(Cys) (Cys-tRNA(Cys)). This chain is O-phospho-L-seryl-tRNA:Cys-tRNA synthase 1, found in Methanospirillum hungatei JF-1 (strain ATCC 27890 / DSM 864 / NBRC 100397 / JF-1).